The primary structure comprises 443 residues: UDP-glucuronic acid decarboxylase 4 (443 aa).

Ala-2 bears the N-acetylalanine mark. Residues 2-43 lie on the Cytoplasmic side of the membrane; it reads ASELTNRRHEIEQPEAESYYPKPIKPWFVAIRPIRYMLREQR. A helical; Signal-anchor for type II membrane protein membrane pass occupies residues 44–64; the sequence is LVFVLVGIAIATLGFTIFSKS. Topologically, residues 65-443 are lumenal; it reads SNHQPIPYDV…DSSTTSSSTE (379 aa). Residue 151–176 coordinates NAD(+); the sequence is DNFFTGRKENVMHHFNNPNFEMIRHD. Arg-260 serves as a coordination point for substrate. The active-site Proton acceptor is the Tyr-263. Residue 263–267 participates in NAD(+) binding; that stretch reads YDEGK. Asn-292 is a substrate binding site. An NAD(+)-binding site is contributed by Arg-304. Residues 305 to 309, 322 to 329, and 389 to 393 each bind substrate; these read VVSNF, YGDGKQTR, and DPHKR.

It belongs to the NAD(P)-dependent epimerase/dehydratase family. UDP-glucuronic acid decarboxylase subfamily. NAD(+) serves as cofactor.

Its subcellular location is the golgi apparatus. The protein localises to the golgi stack membrane. The enzyme catalyses UDP-alpha-D-glucuronate + H(+) = UDP-alpha-D-xylose + CO2. It participates in nucleotide-sugar biosynthesis; UDP-alpha-D-xylose biosynthesis; UDP-alpha-D-xylose from UDP-alpha-D-glucuronate: step 1/1. Its function is as follows. Catalyzes the NAD-dependent decarboxylation of UDP-glucuronic acid to UDP-xylose. Necessary for the biosynthesis of the core tetrasaccharide in glycosaminoglycan biosynthesis. The sequence is that of UDP-glucuronic acid decarboxylase 4 (UXS4) from Arabidopsis thaliana (Mouse-ear cress).